Reading from the N-terminus, the 125-residue chain is Translation initiation factor 5A (125 aa).

At Lys-35 the chain carries Hypusine.

The protein belongs to the eIF-5A family.

Its subcellular location is the cytoplasm. Functions by promoting the formation of the first peptide bond. The chain is Translation initiation factor 5A (eIF5A) from Methanoregula boonei (strain DSM 21154 / JCM 14090 / 6A8).